We begin with the raw amino-acid sequence, 114 residues long: UPF0342 protein SERP1381 (114 aa).

The protein belongs to the UPF0342 family.

The chain is UPF0342 protein SERP1381 from Staphylococcus epidermidis (strain ATCC 35984 / DSM 28319 / BCRC 17069 / CCUG 31568 / BM 3577 / RP62A).